An 80-amino-acid chain; its full sequence is MARKKAALDFEQSLADLQTLVERLENGELSLEDSLTAFEQGIGLTRDCQAALAQAEQKVQVLLERDGELAEEPFDADQPE.

The protein belongs to the XseB family. As to quaternary structure, heterooligomer composed of large and small subunits.

It localises to the cytoplasm. It carries out the reaction Exonucleolytic cleavage in either 5'- to 3'- or 3'- to 5'-direction to yield nucleoside 5'-phosphates.. Its function is as follows. Bidirectionally degrades single-stranded DNA into large acid-insoluble oligonucleotides, which are then degraded further into small acid-soluble oligonucleotides. The sequence is that of Exodeoxyribonuclease 7 small subunit from Pseudomonas fluorescens (strain Pf0-1).